Here is a 317-residue protein sequence, read N- to C-terminus: Olfactory receptor 1082 (317 aa).

Residues 1–26 lie on the Extracellular side of the membrane; that stretch reads MESGNSTRRFSSFFLLGFTENPQLHF. Residue Asn-5 is glycosylated (N-linked (GlcNAc...) asparagine). Residues 27–51 form a helical membrane-spanning segment; that stretch reads LIFALFLSMYLVTVLGNLLIIMAII. The Cytoplasmic segment spans residues 52 to 58; the sequence is TQSHLHT. A helical membrane pass occupies residues 59 to 80; it reads PMYFFLANLSFVDICFTSTTIP. The Extracellular portion of the chain corresponds to 81-101; the sequence is KMLVNIYTQSKSITYEDCISQ. Cys-98 and Cys-190 are disulfide-bonded. The chain crosses the membrane as a helical span at residues 102-121; that stretch reads MCVFLVFAELGNFLLAVMAY. The Cytoplasmic segment spans residues 122 to 140; sequence DRYVAXCHPLCYTVIVNHR. The helical transmembrane segment at 141–159 threads the bilayer; it reads LCILLLLLSWVISIFHAFI. Residues 160–197 lie on the Extracellular side of the membrane; the sequence is QSLIVLQLTFCGDVKIPHFFCELNQLSQLTCSDNFPSH. A helical membrane pass occupies residues 198–220; sequence LIMNLVPVMLAAISFSGILYSYF. The Cytoplasmic segment spans residues 221–237; the sequence is KIVSSIHSISTVQGKYK. A helical membrane pass occupies residues 238-261; sequence AFSTCASHLSIVSLFYSTGLGVYV. The Extracellular portion of the chain corresponds to 262–273; the sequence is SSAVVQSSHSAA. The helical transmembrane segment at 274 to 293 threads the bilayer; that stretch reads SASVMYTVVTPMLNPFIYSL. Residues 294–317 lie on the Cytoplasmic side of the membrane; sequence RNKDVKRALERLLEGNCKVHHWTG.

It belongs to the G-protein coupled receptor 1 family. In terms of tissue distribution, olfactory epithelium.

Its subcellular location is the cell membrane. Functionally, odorant receptor. The sequence is that of Olfactory receptor 1082 (Olr1082) from Rattus norvegicus (Rat).